The sequence spans 346 residues: N-acetyl-gamma-glutamyl-phosphate reductase (346 aa).

Cys150 is a catalytic residue.

Belongs to the NAGSA dehydrogenase family. Type 1 subfamily.

It is found in the cytoplasm. It catalyses the reaction N-acetyl-L-glutamate 5-semialdehyde + phosphate + NADP(+) = N-acetyl-L-glutamyl 5-phosphate + NADPH + H(+). The protein operates within amino-acid biosynthesis; L-arginine biosynthesis; N(2)-acetyl-L-ornithine from L-glutamate: step 3/4. Its function is as follows. Catalyzes the NADPH-dependent reduction of N-acetyl-5-glutamyl phosphate to yield N-acetyl-L-glutamate 5-semialdehyde. This Desulforudis audaxviator (strain MP104C) protein is N-acetyl-gamma-glutamyl-phosphate reductase.